The chain runs to 292 residues: Keratin-associated protein 10-9 (292 aa).

25 consecutive repeat copies span residues 26 to 30 (CCEPP), 31 to 35 (CCATS), 36 to 40 (CCAPA), 57 to 61 (CCQVT), 79 to 83 (CCQQS), 99 to 103 (CCVPV), 104 to 108 (CCKPV), 109 to 113 (CCVPV), 114 to 118 (CCGAS), 120 to 124 (CCQQS), 130 to 134 (CCASS), 140 to 144 (CCVPV), 145 to 149 (CCKPV), 150 to 154 (CCAPT), 162 to 166 (CCQQS), 172 to 176 (CCTSS), 182 to 186 (YCVPV), 187 to 191 (CCKPV), 192 to 196 (CCKPI), 197 to 201 (CCVPV), 209 to 213 (CCQQS), 219 to 223 (CCTTS), 224 to 228 (CCRPS), 243 to 247 (CCVPV), and 250 to 254 (CCAPT). A 25 X 5 AA repeats of C-C-X(3) region spans residues 26-254 (CCEPPCCATS…VPVSSCCAPT (229 aa)).

The protein belongs to the KRTAP type 10 family. As to quaternary structure, interacts with hair keratins. In terms of tissue distribution, restricted to a narrow region of the hair fiber cuticle, lying approximately 20 cell layers above the apex of the dermal papilla of the hair root; not detected in any other tissues.

Its function is as follows. In the hair cortex, hair keratin intermediate filaments are embedded in an interfilamentous matrix, consisting of hair keratin-associated proteins (KRTAP), which are essential for the formation of a rigid and resistant hair shaft through their extensive disulfide bond cross-linking with abundant cysteine residues of hair keratins. The matrix proteins include the high-sulfur and high-glycine-tyrosine keratins. The chain is Keratin-associated protein 10-9 (KRTAP10-9) from Homo sapiens (Human).